The chain runs to 1275 residues: Inner capsid protein lambda-1 (1275 aa).

The span at 1–12 (MKRIPRKTKGKS) shows a compositional bias: basic residues. The tract at residues 1–149 (MKRIPRKTKG…DNEGGSNQKP (149 aa)) is disordered. Basic and acidic residues-rich tracts occupy residues 18–35 (DSTERADDGSSQLRDKQN) and 75–117 (NNDE…DKSK). The span at 118 to 149 (AQVTYSDTGINNANELSRSGNVDNEGGSNQKP) shows a compositional bias: polar residues. A C2H2-type zinc finger spans residues 181–203 (YQCHVCSAVLFSPLDLDAHVASH).

It belongs to the orthoreovirus lambda-1 protein family. Homodecamer; each decamer is made up of two conformers of VP2, called VP2A and VP2B. 12 homodecamers assemble to form an icosahedral capsid. Interacts with protein mu-NS; in viral inclusions. Requires Mg(2+) as cofactor. It depends on Mn(2+) as a cofactor.

The protein resides in the virion. The enzyme catalyses ATP + H2O = ADP + phosphate + H(+). Functionally, inner capsid protein that self-assembles to form an icosahedral capsid with a T=2 symmetry, which consists of 120 copies of VP2, with channels at each of its five-fold vertices. This capsid constitutes the innermost concentric layer of the viral mature particle. Its function is as follows. Displays NTPase, RNA 5'-triphosphatase (RTPase) and RNA helicase activities. Helicase activity might be involved in unwinding or reannealing dsRNA during RNA synthesis. RTPase enzymatic activity represents the first step in RNA capping, which yields a 5'-diphosphorylated plus-strand RNA. The sequence is that of Inner capsid protein lambda-1 (L3) from Reovirus type 3 (strain Dearing) (T3D).